The sequence spans 90 residues: Small ribosomal subunit protein uS15c (90 aa).

This sequence belongs to the universal ribosomal protein uS15 family. Part of the 30S ribosomal subunit.

The protein localises to the plastid. It is found in the chloroplast. The protein is Small ribosomal subunit protein uS15c (rps15) of Drimys granadensis.